The chain runs to 772 residues: MDSKESLSPPGREEVPSSVLRPAERGNVMDLYKTLRGGAPVRVPASSPSLAPAAQPDSKQQRLAVDFPKGSASNAQQPDLSRAVSLSMGLYMGETETKVMGSDLAFPQQGQTSLSSGETDFRLLEESIASLNRSASGADNPRSTAPAAGSAAPTEGFPKTHSDLASERQNPKGQTGGSAGSAKLHPTDQSTFDILQDLEFSGSPSKDRSESPWRSDLLMDENCLLSPLAGEDDPFLLEGNSSEDCKPLILPDTKPKIKDNGDLILSNSNNVPLPQVKTEKEDFIELCTPGVIKQEKLGPVYCQASFSGANIIGNKISAISVHGVSTSGGQMYHYDMNAQQQEQKPLFNVIPPIPVGSENWNRCQGSGDDNLTSLGTMNFPGRSVFSNGYSSPGMRPDVSSPPSNSTTAAGPPPKLCLVCSDEASGCHYGVLTCGSCKVFFKRAVKGQHNYLCAGRNDCIIDKIRRKNCPACRYRKCLQAGMNLEARKTKKKIKGIQQTSTGVSQETSENPSNRTVVPAALPQLTPTLVSLLEVIEPEVLYAGYDSSVPDSTWRIMTTLNMLGGRQVIAAVKWAKAIPGFRNLHLDDQMTLLQYSWMFLMAFALGWRSYKQSSGNMLCFAPDLVINEQRMTLPYMYDQCKHMLFVSSELKRLQVSYEEYLCMKTLLLLSTVPKEGLKSQELFDEIRMTYIKELGKAIVKREGNSSQNWQRFYQLTKLLDSMHEVVENLLHYCFQTFLDKTMSIEFPEMLAEIITNQIPKYSNGNIKKLLFHQK.

Over residues 1–15 the composition is skewed to basic and acidic residues; the sequence is MDSKESLSPPGREEV. The tract at residues 1–22 is disordered; the sequence is MDSKESLSPPGREEVPSSVLRP. The segment at 1-415 is modulating; sequence MDSKESLSPP…TTAAGPPPKL (415 aa). Residue Arg-25 is modified to Omega-N-methylarginine. The interval 39 to 82 is disordered; sequence APVRVPASSPSLAPAAQPDSKQQRLAVDFPKGSASNAQQPDLSR. Low complexity predominate over residues 44 to 58; it reads PASSPSLAPAAQPDS. Residues Ser-47, Ser-115, Ser-136, and Ser-143 each carry the phosphoserine modification. Positions 132–186 are disordered; the sequence is NRSASGADNPRSTAPAAGSAAPTEGFPKTHSDLASERQNPKGQTGGSAGSAKLHP. The span at 143–156 shows a compositional bias: low complexity; it reads STAPAAGSAAPTEG. The span at 158-170 shows a compositional bias: basic and acidic residues; that stretch reads PKTHSDLASERQN. Phosphoserine occurs at positions 203, 211, and 226. Lys-258 is covalently cross-linked (Glycyl lysine isopeptide (Lys-Gly) (interchain with G-Cter in SUMO2)). Residues Lys-277 and Lys-293 each participate in a glycyl lysine isopeptide (Lys-Gly) (interchain with G-Cter in SUMO); alternate cross-link. Residues Lys-277 and Lys-293 each participate in a glycyl lysine isopeptide (Lys-Gly) (interchain with G-Cter in SUMO2); alternate cross-link. Ser-307 and Ser-400 each carry phosphoserine. Lys-414 participates in a covalent cross-link: Glycyl lysine isopeptide (Lys-Gly) (interchain with G-Cter in ubiquitin). 2 NR C4-type zinc fingers span residues 416–436 and 452–476; these read CLVC…CGSC and CAGR…YRKC. Residues 416–481 constitute a DNA-binding region (nuclear receptor); that stretch reads CLVCSDEASG…RYRKCLQAGM (66 aa). Lys-475, Lys-487, Lys-489, and Lys-490 each carry N6-acetyllysine. Residues 480–772 are interaction with CLOCK; the sequence is GMNLEARKTK…NIKKLLFHQK (293 aa). Residues 482-518 form a hinge region; that stretch reads NLEARKTKKKIKGIQQTSTGVSQETSENPSNRTVVPA. Positions 494 to 513 are disordered; that stretch reads GIQQTSTGVSQETSENPSNR. Positions 499–513 are enriched in polar residues; sequence STGVSQETSENPSNR. An NR LBD domain is found at 519 to 753; it reads ALPQLTPTLV…FPEMLAEIIT (235 aa). Residues 527-692 are interaction with CRY1; sequence LVSLLEVIEP…EIRMTYIKEL (166 aa). Lys-698 is covalently cross-linked (Glycyl lysine isopeptide (Lys-Gly) (interchain with G-Cter in SUMO)).

The protein belongs to the nuclear hormone receptor family. NR3 subfamily. In terms of assembly, heteromultimeric cytoplasmic complex with HSP90AA1, HSPA1A/HSPA1B, and FKBP5 or another immunophilin such as PPID, STIP1, or the immunophilin homolog PPP5C. Upon ligand binding FKBP5 dissociates from the complex and FKBP4 takes its place, thereby linking the complex to dynein and mediating transport to the nucleus, where the complex dissociates. Probably forms a complex composed of chaperones HSP90 and HSP70, co-chaperones CDC37, PPP5C, TSC1 and client protein TSC2, CDK4, AKT, RAF1 and NR3C1; this complex does not contain co-chaperones STIP1/HOP and PTGES3/p23. Directly interacts with UNC45A. Binds to DNA as a homodimer, and as heterodimer with NR3C2 or the retinoid X receptor. Binds STAT5A and STAT5B homodimers and heterodimers. Interacts with NRIP1, POU2F1, POU2F2 and TRIM28. Interacts with several coactivator complexes, including the SMARCA4 complex, CREBBP/EP300, TADA2L (Ada complex) and p160 coactivators such as NCOA2 and NCOA6. Interaction with BAG1 inhibits transactivation. Interacts with HEXIM1 and TGFB1I1. Interacts with NCOA1. Interacts with NCOA3, SMARCA4, SMARCC1, SMARCD1, and SMARCE1. Interacts with CLOCK, CRY1 and CRY2 in a ligand-dependent fashion. Interacts with CIART. Interacts with RWDD3. Interacts with UBE2I/UBC9 and this interaction is enhanced in the presence of RWDD3. Interacts with GRIP1. Interacts with NR4A3 (via nuclear receptor DNA-binding domain), represses transcription activity of NR4A3 on the POMC promoter Nur response element (NurRE). Directly interacts with PNRC2 to attract and form a complex with UPF1 and DCP1A; the interaction leads to rapid mRNA degradation. Interacts with GSK3B. Interacts with FNIP1 and FNIP2. Interacts (via C-terminus) with HNRNPU (via C-terminus). Interacts with MCM3AP. Interacts (via domain NR LBD) with HSP90AA1 and HSP90AB1. In the absence of hormonal ligand, interacts with TACC1. Interacts (via NR LBD domain) with ZNF764 (via KRAB domain); the interaction regulates transcription factor activity of NR3C1 by directing its actions toward certain biologic pathways. Post-translationally, acetylation by CLOCK reduces its binding to glucocorticoid response elements and its transcriptional activity. Increased proteasome-mediated degradation in response to glucocorticoids. In terms of processing, phosphorylated in the absence of hormone; becomes hyperphosphorylated in the presence of glucocorticoid. The Ser-203, Ser-226 and Ser-399-phosphorylated forms are mainly cytoplasmic, and the Ser-211-phosphorylated form is nuclear. Phosphorylation at Ser-211 increases transcriptional activity. Phosphorylation at Ser-203, Ser-226 and Ser-399 decreases signaling capacity. Phosphorylation at Ser-399 may protect from glucocorticoid-induced apoptosis. Phosphorylation at Ser-203 and Ser-211 is not required in regulation of chromosome segregation. May be dephosphorylated by PPP5C, attenuates NR3C1 action. Post-translationally, ubiquitinated by UBR5, leading to its degradation: UBR5 specifically recognizes and binds ligand-bound NR3C1 when it is not associated with coactivators (NCOAs). In presence of NCOAs, the UBR5-degron is not accessible, preventing its ubiquitination and degradation. Sumoylation at Lys-277 and Lys-293 negatively regulates its transcriptional activity. Sumoylation at Lys-698 positively regulates its transcriptional activity in the presence of RWDD3. Sumoylation at Lys-277 and Lys-293 is dispensable whereas sumoylation at Lys-698 is critical for the stimulatory effect of RWDD3 on its transcriptional activity. Heat shock increases sumoylation in a RWDD3-dependent manner.

It localises to the cytoplasm. Its subcellular location is the nucleus. The protein localises to the mitochondrion. It is found in the cytoskeleton. The protein resides in the spindle. It localises to the microtubule organizing center. Its subcellular location is the centrosome. The protein localises to the chromosome. It is found in the nucleoplasm. Receptor for glucocorticoids (GC). Has a dual mode of action: as a transcription factor that binds to glucocorticoid response elements (GRE), both for nuclear and mitochondrial DNA, and as a modulator of other transcription factors. Affects inflammatory responses, cellular proliferation and differentiation in target tissues. Involved in chromatin remodeling. Plays a role in rapid mRNA degradation by binding to the 5' UTR of target mRNAs and interacting with PNRC2 in a ligand-dependent manner which recruits the RNA helicase UPF1 and the mRNA-decapping enzyme DCP1A, leading to RNA decay. Could act as a coactivator for STAT5-dependent transcription upon growth hormone (GH) stimulation and could reveal an essential role of hepatic GR in the control of body growth. Mediates glucocorticoid-induced apoptosis. Promotes accurate chromosome segregation during mitosis. May act as a tumor suppressor. May play a negative role in adipogenesis through the regulation of lipolytic and antilipogenic gene expression. The protein is Glucocorticoid receptor (NR3C1) of Oryctolagus cuniculus (Rabbit).